We begin with the raw amino-acid sequence, 146 residues long: Large ribosomal subunit protein bL9 (146 aa).

The protein belongs to the bacterial ribosomal protein bL9 family.

Its function is as follows. Binds to the 23S rRNA. The chain is Large ribosomal subunit protein bL9 from Deinococcus geothermalis (strain DSM 11300 / CIP 105573 / AG-3a).